The primary structure comprises 275 residues: Large ribosomal subunit protein uL2 (275 aa).

Disordered stretches follow at residues 28 to 54 and 223 to 275; these read APHA…TRHI and VAMN…RNKK.

Belongs to the universal ribosomal protein uL2 family. Part of the 50S ribosomal subunit. Forms a bridge to the 30S subunit in the 70S ribosome.

One of the primary rRNA binding proteins. Required for association of the 30S and 50S subunits to form the 70S ribosome, for tRNA binding and peptide bond formation. It has been suggested to have peptidyltransferase activity; this is somewhat controversial. Makes several contacts with the 16S rRNA in the 70S ribosome. The protein is Large ribosomal subunit protein uL2 of Saccharophagus degradans (strain 2-40 / ATCC 43961 / DSM 17024).